Consider the following 363-residue polypeptide: UDP-3-O-acylglucosamine N-acyltransferase (363 aa).

H239 functions as the Proton acceptor in the catalytic mechanism. The segment at 342–363 is disordered; it reads LSEMKKEVEKEKESSREKEETK.

Belongs to the transferase hexapeptide repeat family. LpxD subfamily. As to quaternary structure, homotrimer.

The enzyme catalyses a UDP-3-O-[(3R)-3-hydroxyacyl]-alpha-D-glucosamine + a (3R)-hydroxyacyl-[ACP] = a UDP-2-N,3-O-bis[(3R)-3-hydroxyacyl]-alpha-D-glucosamine + holo-[ACP] + H(+). It participates in bacterial outer membrane biogenesis; LPS lipid A biosynthesis. Its function is as follows. Catalyzes the N-acylation of UDP-3-O-acylglucosamine using 3-hydroxyacyl-ACP as the acyl donor. Is involved in the biosynthesis of lipid A, a phosphorylated glycolipid that anchors the lipopolysaccharide to the outer membrane of the cell. In Syntrophus aciditrophicus (strain SB), this protein is UDP-3-O-acylglucosamine N-acyltransferase.